Consider the following 260-residue polypeptide: Putative imidazole glycerol phosphate synthase subunit hisF3 (260 aa).

Aspartate 135 is a catalytic residue.

This sequence belongs to the HisA/HisF family. In terms of assembly, heterodimer of HisH and HisF.

The protein resides in the cytoplasm. It catalyses the reaction 5-[(5-phospho-1-deoxy-D-ribulos-1-ylimino)methylamino]-1-(5-phospho-beta-D-ribosyl)imidazole-4-carboxamide + L-glutamine = D-erythro-1-(imidazol-4-yl)glycerol 3-phosphate + 5-amino-1-(5-phospho-beta-D-ribosyl)imidazole-4-carboxamide + L-glutamate + H(+). The protein operates within amino-acid biosynthesis; L-histidine biosynthesis; L-histidine from 5-phospho-alpha-D-ribose 1-diphosphate: step 5/9. Functionally, IGPS catalyzes the conversion of PRFAR and glutamine to IGP, AICAR and glutamate. The HisF subunit catalyzes the cyclization activity that produces IGP and AICAR from PRFAR using the ammonia provided by the HisH subunit. The protein is Putative imidazole glycerol phosphate synthase subunit hisF3 (hisF3) of Vibrio vulnificus (strain YJ016).